A 165-amino-acid chain; its full sequence is uncharacterized protein (165 aa).

Residues 16–36 (ASISSILNFFFFYIMEYFVAV) traverse the membrane as a helical segment.

This sequence belongs to the asfivirus F165R family.

It is found in the host membrane. This is an uncharacterized protein from African swine fever virus (strain Badajoz 1971 Vero-adapted) (Ba71V).